We begin with the raw amino-acid sequence, 271 residues long: Formamidopyrimidine-DNA glycosylase (271 aa).

P2 serves as the catalytic Schiff-base intermediate with DNA. The Proton donor role is filled by E3. K56 functions as the Proton donor; for beta-elimination activity in the catalytic mechanism. DNA is bound by residues H89, R107, and K151. The FPG-type zinc-finger motif lies at 236–270; that stretch reads NVYGRAGLQCRQCGTPVRLSRQGQRSTYFCPHCQR. R260 functions as the Proton donor; for delta-elimination activity in the catalytic mechanism.

It belongs to the FPG family. Monomer. It depends on Zn(2+) as a cofactor.

It carries out the reaction Hydrolysis of DNA containing ring-opened 7-methylguanine residues, releasing 2,6-diamino-4-hydroxy-5-(N-methyl)formamidopyrimidine.. It catalyses the reaction 2'-deoxyribonucleotide-(2'-deoxyribose 5'-phosphate)-2'-deoxyribonucleotide-DNA = a 3'-end 2'-deoxyribonucleotide-(2,3-dehydro-2,3-deoxyribose 5'-phosphate)-DNA + a 5'-end 5'-phospho-2'-deoxyribonucleoside-DNA + H(+). In terms of biological role, involved in base excision repair of DNA damaged by oxidation or by mutagenic agents. Acts as a DNA glycosylase that recognizes and removes damaged bases. Has a preference for oxidized purines, such as 7,8-dihydro-8-oxoguanine (8-oxoG). Has AP (apurinic/apyrimidinic) lyase activity and introduces nicks in the DNA strand. Cleaves the DNA backbone by beta-delta elimination to generate a single-strand break at the site of the removed base with both 3'- and 5'-phosphates. This Acidovorax ebreus (strain TPSY) (Diaphorobacter sp. (strain TPSY)) protein is Formamidopyrimidine-DNA glycosylase.